A 436-amino-acid chain; its full sequence is Cytochrome b5-related protein (436 aa).

The Cytochrome b5 heme-binding domain occupies 16–100 (PTYRNSALIT…IAKYKVRDAA (85 aa)). Residues H59 and H82 each contribute to the heme site.

In terms of tissue distribution, muscle.

May play a role in muscle cell metabolism. In Drosophila melanogaster (Fruit fly), this protein is Cytochrome b5-related protein (Cyt-b5-r).